Here is a 540-residue protein sequence, read N- to C-terminus: Collagen alpha-1(XXIII) chain (540 aa).

Residues 1-26 (MGPGERAGGGGDAGKGNAAGGGGGGR) are compositionally biased toward gly residues. The disordered stretch occupies residues 1–28 (MGPGERAGGGGDAGKGNAAGGGGGGRSA). Over 1–34 (MGPGERAGGGGDAGKGNAAGGGGGGRSATTAGSR) the chain is Cytoplasmic. Residues 35-56 (AVSALCLLLSVGSAAACLLLGV) traverse the membrane as a helical; Signal-anchor for type II membrane protein segment. Topologically, residues 57-540 (QAAALQGRVA…GLPVPGCWHK (484 aa)) are extracellular. Disordered stretches follow at residues 109–304 (AREA…GEQG) and 316–540 (LDAL…CWHK). Collagen-like domains follow at residues 124 to 243 (GRRG…PGKK), 251 to 305 (QPGP…EQGD), 321 to 380 (GPPG…MGLS), 412 to 460 (GPPG…GPPG), and 463 to 522 (GLPG…PGLD). Low complexity-rich tracts occupy residues 140-156 (QSGRDGYPGPLGLDGKP) and 168-183 (PGDFGPRGDQGQDGAA). Positions 185-195 (PPGPPGPPGAR) are enriched in pro residues. The segment covering 322–334 (PPGPQGPPGPPGI) has biased composition (pro residues). Residues 350–362 (DGEKGPKGQKGDP) show a composition bias toward basic and acidic residues. The span at 411–422 (PGPPGPPGPPGP) shows a compositional bias: pro residues. 2 stretches are compositionally biased toward basic and acidic residues: residues 435-444 (DGAKGEKGAS) and 486-503 (RGEKGDRSERGEKGERGV).

Homotrimer. Post-translationally, undergoes proteolytic cleavage by furin protease to yield a 60 kDa soluble form that forms a homotrimer and exhibits a low affinity interaction with heparin.

Its subcellular location is the cell membrane. The protein is Collagen alpha-1(XXIII) chain (COL23A1) of Homo sapiens (Human).